The primary structure comprises 213 residues: Receptor-binding cancer antigen expressed on SiSo cells (213 aa).

Residues 1–6 lie on the Extracellular side of the membrane; the sequence is MAITQF. A helical; Signal-anchor for type III membrane protein membrane pass occupies residues 7–27; the sequence is RLFKVCTCLATVFSFLKRLIC. Over 28 to 213 the chain is Cytoplasmic; the sequence is RSGRGRKLSG…EQNKIGVKLS (186 aa). Phosphoserine is present on Ser-36. The residue at position 41 (Thr-41) is a Phosphothreonine. The residue at position 94 (Tyr-94) is a Phosphotyrosine. The stretch at 163 to 211 forms a coiled coil; sequence EDAAWQAEEVLRQQKIADREKRAAEQQRKRMEKEAQRLMRKEQNKIGVK. Basic and acidic residues predominate over residues 179–206; sequence ADREKRAAEQQRKRMEKEAQRLMRKEQN. A disordered region spans residues 179–213; sequence ADREKRAAEQQRKRMEKEAQRLMRKEQNKIGVKLS.

In terms of assembly, homodimer.

Its subcellular location is the golgi apparatus membrane. May participate in suppression of cell proliferation and induces apoptotic cell death through activation of interleukin-1-beta converting enzyme (ICE)-like proteases. The protein is Receptor-binding cancer antigen expressed on SiSo cells (EBAG9) of Canis lupus familiaris (Dog).